The primary structure comprises 301 residues: GTPase Era (301 aa).

The region spanning 4–173 (KAGFVALIGK…LECISEHLSP (170 aa)) is the Era-type G domain. The tract at residues 12 to 19 (GKPNAGKS) is G1. 12–19 (GKPNAGKS) serves as a coordination point for GTP. Residues 38–42 (NATRK) form a G2 region. The interval 64–67 (DTPG) is G3. GTP contacts are provided by residues 64 to 68 (DTPGL) and 122 to 125 (SKID). Residues 122–125 (SKID) are G4. A G5 region spans residues 152 to 154 (LSA). Residues 204-280 (LSDEIPYESD…FLNLQVIAQK (77 aa)) enclose the KH type-2 domain.

This sequence belongs to the TRAFAC class TrmE-Era-EngA-EngB-Septin-like GTPase superfamily. Era GTPase family. Monomer.

Its subcellular location is the cytoplasm. It is found in the cell inner membrane. In terms of biological role, an essential GTPase that binds both GDP and GTP, with rapid nucleotide exchange. Plays a role in 16S rRNA processing and 30S ribosomal subunit biogenesis and possibly also in cell cycle regulation and energy metabolism. This is GTPase Era from Helicobacter acinonychis (strain Sheeba).